The sequence spans 338 residues: Malate dehydrogenase, mitochondrial (338 aa).

The N-terminal 24 residues, 1–24, are a transit peptide targeting the mitochondrion; that stretch reads MLSALARPASAALRRSFSTSAQNN. Residues 31–37 and D57 each bind NAD(+); that span reads GASGGIG. O-linked (GlcNAc) serine glycosylation occurs at S33. Residues K78 and K91 each carry the N6-acetyllysine; alternate modification. N6-succinyllysine; alternate occurs at positions 78 and 91. The substrate site is built by R104 and R110. NAD(+) is bound by residues N117 and 140 to 142; that span reads IAN. Residue N142 participates in substrate binding. The residue at position 165 (K165) is an N6-acetyllysine. Residue R176 participates in substrate binding. An N6-acetyllysine; alternate modification is found at K185. An N6-succinyllysine; alternate modification is found at K185. H200 serves as the catalytic Proton acceptor. K203 carries the post-translational modification N6-succinyllysine. N6-acetyllysine; alternate is present on residues K215 and K239. An N6-succinyllysine; alternate mark is found at K215 and K239. K239 is subject to N6-malonyllysine; alternate. S246 carries the post-translational modification Phosphoserine. M251 serves as a coordination point for NAD(+). K269 is modified (N6-succinyllysine). N6-acetyllysine; alternate is present on residues K296, K301, K314, and K324. An N6-succinyllysine; alternate mark is found at K296, K301, K314, and K324. Position 326 is a phosphoserine (S326). 3 positions are modified to N6-acetyllysine; alternate: K328, K329, and K335. K328 is modified (N6-succinyllysine; alternate). The residue at position 329 (K329) is an N6-malonyllysine; alternate. At K335 the chain carries N6-succinyllysine; alternate.

The protein belongs to the LDH/MDH superfamily. MDH type 1 family. As to quaternary structure, homodimer. Post-translationally, acetylation is enhanced after treatment either with trichostin A (TCA) or with nicotinamide (NAM) with the appearance of tri- and tetraacetylations. Glucose also increases acetylation.

It is found in the mitochondrion matrix. The catalysed reaction is (S)-malate + NAD(+) = oxaloacetate + NADH + H(+). Enzyme activity is enhanced by acetylation. The chain is Malate dehydrogenase, mitochondrial (MDH2) from Macaca fascicularis (Crab-eating macaque).